Reading from the N-terminus, the 314-residue chain is Protein YdgH (314 aa).

Residues 1–19 (MKLKNTLLASALLSAMAFS) form the signal peptide.

It to E.coli YjfY.

The polypeptide is Protein YdgH (ydgH) (Escherichia coli (strain K12)).